The sequence spans 292 residues: Probable E3 ubiquitin-protein ligase RNF144A (292 aa).

The TRIAD supradomain stretch occupies residues 16–236 (PLVSCKLCLG…YDKGPCRNKL (221 aa)). Positions 20, 23, 43, 46, 111, 116, 135, 138, 143, 146, 151, 156, 185, and 188 each coordinate Zn(2+). The segment at 20-70 (CKLCLGEYTVEQMTTIAQCQCIFCTLCLKQYVELLIKEGLETAISCPDASC) adopts an RING-type 1 zinc-finger fold. Residues 91 to 156 (QKYKKLQFEK…KANWHPGQGC (66 aa)) form an IBR-type zinc finger. The RING-type 2; atypical zinc-finger motif lies at 185-214 (CPKCKVYIERDEGCAQMMCKNCKHAFCWYC). Cys198 is a catalytic residue. The Zn(2+) site is built by Cys203, Cys206, Cys211, Cys214, His226, and Cys232. A helical transmembrane segment spans residues 250-270 (VVGIFAGFGLLLLVASPFLLL).

This sequence belongs to the RBR family. RNF144 subfamily.

The protein resides in the membrane. It catalyses the reaction [E2 ubiquitin-conjugating enzyme]-S-ubiquitinyl-L-cysteine + [acceptor protein]-L-lysine = [E2 ubiquitin-conjugating enzyme]-L-cysteine + [acceptor protein]-N(6)-ubiquitinyl-L-lysine.. It participates in protein modification; protein ubiquitination. E3 ubiquitin-protein ligase which accepts ubiquitin from E2 ubiquitin-conjugating enzymes ube2l3 and ube2l6 in the form of a thioester and then directly transfers the ubiquitin to targeted substrates. The chain is Probable E3 ubiquitin-protein ligase RNF144A (rnf144a) from Xenopus tropicalis (Western clawed frog).